Consider the following 1330-residue polypeptide: Fanconi anemia group I protein homolog (1330 aa).

Lysine 522 participates in a covalent cross-link: Glycyl lysine isopeptide (Lys-Gly) (interchain with G-Cter in ubiquitin). At serine 555 the chain carries Phosphoserine. Threonine 558 is subject to Phosphothreonine. Serine 729 is modified (phosphoserine). Position 948 is a phosphothreonine (threonine 948). A Phosphoserine modification is found at serine 1122. Residues 1299 to 1330 (EDEEDENEEGTASAHTQQDREPAKKRRKKCLS) are disordered. The span at 1321-1330 (AKKRRKKCLS) shows a compositional bias: basic residues.

The protein belongs to the Fanconi anemia group I protein family. As to quaternary structure, homodimer. Part of a FANCI-FANCD2 heterodimeric complex that binds and scans dsDNA for DNA damage. Interacts with FANCL. Interacts with MTMR15/FAN1. Interacts with POLN. Interacts with UBL5; the interaction promotes FANCI homodimerization. In terms of processing, monoubiquitinated by FANCL on Lys-522 during S phase and upon genotoxic stress. Deubiquitinated by USP1 as cells enter G2/M, or once DNA repair is completed. Monoubiquitination requires the FANCA-FANCB-FANCC-FANCE-FANCF-FANCG-FANCM complex. Ubiquitination is required for binding to chromatin, DNA repair, and normal cell cycle progression. Monoubiquitination is stimulated by DNA-binding. Phosphorylated in response to DNA damage by ATM and/or ATR. Phosphorylation of FANCI promotes ubiquitination of FANCD2, which prevents DNA release from the FANCI-FANCD2 complex.

Its subcellular location is the nucleus. It localises to the cytoplasm. Its function is as follows. Plays an essential role in the repair of DNA double-strand breaks by homologous recombination and in the repair of interstrand DNA cross-links (ICLs) by promoting FANCD2 monoubiquitination by FANCL and participating in recruitment to DNA repair sites. The FANCI-FANCD2 complex binds and scans double-stranded DNA (dsDNA) for DNA damage; this complex stalls at DNA junctions between double-stranded DNA and single-stranded DNA. Participates in S phase and G2 phase checkpoint activation upon DNA damage. This Mus musculus (Mouse) protein is Fanconi anemia group I protein homolog (Fanci).